Consider the following 591-residue polypeptide: MSNYNVSLVGPAPWGFRLQGGKDFNMPLTISSLKDGGKASQAHVRIGDVVLSIDGISAQGMTHLEAQNKIKACTGSLNMTLQRASAAAKSEPVAVQKGEPKEVVKPVPITSPAVSKVTSTTNMAYNKVPRPFGSVSSPKVTSIPSPSSAFTPAHAATSSHASPPPVAAVTPPPLSASGLHASANPSAAQCSSPPNTGKPAVHVPRQPTVTSVCSESAQELAEGQRRGSQGDIKQQNGPPRKHIVERNTEFYHIPTHSDASKKRLIEDTEDWRPRTGTTQSRSFRILAQITGTEHLKESENDNAKKANSTPEPSQQSASPLSAAESLESPGSNRPVVAGLRSAAAFKPVGSTSVKSPSWQRPNQAAPSTGRISNSASSSGTGAPMKPAVGPPQPSDQDTLVQRAEHIPAGKRTPMCAHCNQAIRGPFLVALGKSWHPEEFNCAHCKNTMAYIGFVEEKGALYCELCYEKFFAPECGRCQRKILGEVINALKQTWHVSCFVCVACGKPIRNNVFHLEDGEPYCETDYYALFGTICRGCEFPIEAGDMFLEALGSTWHDTCFVCSVCCESLEGQTFFSKKDKPLCKKHAHSVNF.

N-acetylserine is present on S2. The residue at position 2 (S2) is a Phosphoserine. The region spanning 2–85 is the PDZ domain; it reads SNYNVSLVGP…SLNMTLQRAS (84 aa). At K89 the chain carries N6-acetyllysine; alternate. K89 is modified (N6-succinyllysine; alternate). Residue K89 forms a Glycyl lysine isopeptide (Lys-Gly) (interchain with G-Cter in SUMO2); alternate linkage. Phosphoserine is present on residues S111, S134, and S137. Disordered stretches follow at residues 125-240 and 255-334; these read YNKV…GPPR and THSD…SNRP. Residues 134-143 show a composition bias toward polar residues; the sequence is SVSSPKVTSI. Residues 144–161 are compositionally biased toward low complexity; it reads PSPSSAFTPAHAATSSHA. Residues 162–174 show a composition bias toward pro residues; the sequence is SPPPVAAVTPPPL. 2 stretches are compositionally biased toward polar residues: residues 183–195 and 207–217; these read ANPS…SPPN and PTVTSVCSESA. 2 positions are modified to phosphoserine: S228 and S260. 2 stretches are compositionally biased toward basic and acidic residues: residues 258 to 273 and 293 to 304; these read DASK…DWRP and EHLKESENDNAK. Positions 310–329 are enriched in low complexity; that stretch reads PEPSQQSASPLSAAESLESP. A phosphoserine mark is found at S313 and S318. Position 346 is an N6-acetyllysine (K346). The interval 348–398 is disordered; it reads VGSTSVKSPSWQRPNQAAPSTGRISNSASSSGTGAPMKPAVGPPQPSDQDT. A compositionally biased stretch (polar residues) spans 349-380; the sequence is GSTSVKSPSWQRPNQAAPSTGRISNSASSSGT. A phosphoserine mark is found at S355 and S357. 3 consecutive LIM zinc-binding domains span residues 413-472, 472-531, and 531-591; these read PMCA…FFAP, PECG…LFGT, and TICR…SVNF.

As to quaternary structure, interacts with various PKC isoforms through the LIM domains. Interacts with actin and alpha-actinin through the PDZ domain. Interacts (via LIM domains) with SIPA1L1/SPAR; this interaction may occur preferentially with isoform 1. Detected in brain, in neurons, including in hippocampal neurons, and glial cells (at protein level). Detected in heart and skeletal muscle.

It is found in the postsynaptic density. The protein localises to the presynapse. Its subcellular location is the postsynapse. The protein resides in the cytoplasm. It localises to the cytosol. May play an important role in the heart development by scaffolding PKC to the Z-disk region. May play a role in the regulation of cardiomyocyte expansion. Isoforms lacking the LIM domains may negatively modulate the scaffolding activity of isoform 1. Overexpression promotes the development of heart hypertrophy. Contributes to the regulation of dendritic spine morphogenesis in neurons. May be required to restrain postsynaptic growth of excitatory synapses. Isoform 1, but not isoform 2, expression favors spine thinning and elongation. This is PDZ and LIM domain protein 5 (Pdlim5) from Rattus norvegicus (Rat).